Consider the following 345-residue polypeptide: MSTPTPLSYKDAGVDIDAGNALVNNIKAAVKRTRRPEVMGNLGGFGALCELPTKYKQPVLVSGTDGVGTKLRLAIDYKKHDTVGIDLVAMCVNDLIVQGAEPLFFLDYYATGKLDVETATAVVNGIGEGCFQSGCALIGGETAEMPGMYEGEDYDLAGFCVGVVEKADIIDGSKVAAGDALIALASSGPHSNGYSLVRKVLEVSQADPQQDLNGKPLIQHLLEPTKIYVKSLLKLIEASDVHAMAHITGGGFWENIPRVLPENCKAVIQGDSWQWPAVFSWLMENGNIAEYEMYRTFNCGVGMIVALPADKVDAALALLAAEGEQAWLIGAIAAREGNEEQVEIL.

The protein belongs to the AIR synthase family.

Its subcellular location is the cytoplasm. The catalysed reaction is 2-formamido-N(1)-(5-O-phospho-beta-D-ribosyl)acetamidine + ATP = 5-amino-1-(5-phospho-beta-D-ribosyl)imidazole + ADP + phosphate + H(+). It participates in purine metabolism; IMP biosynthesis via de novo pathway; 5-amino-1-(5-phospho-D-ribosyl)imidazole from N(2)-formyl-N(1)-(5-phospho-D-ribosyl)glycinamide: step 2/2. This Shewanella oneidensis (strain ATCC 700550 / JCM 31522 / CIP 106686 / LMG 19005 / NCIMB 14063 / MR-1) protein is Phosphoribosylformylglycinamidine cyclo-ligase.